A 152-amino-acid chain; its full sequence is MQYHSALYVYIYVTFTTIPYKEKPDIISICFSMLSFVFDFSVRICSRTLESFSWSLISSSAFKVVSAFSLAGSCVLASRSSVGIIVSLLLFNFSTCNFVLFLSAVLIDLFFCTFLPTPTFLPTPFFFMLHLPIFSLLNALELLYLIIAGLHI.

Transmembrane regions (helical) follow at residues Ile26 to Ser46, Leu56 to Leu76, Val82 to Leu102, Leu106 to Phe126, and Phe127 to Ile147.

The protein resides in the cell membrane. It localises to the secreted. It is found in the cell wall. Involved in maintaining an adequate ionic strength homeostasis of the cellular aqueous environment, necessary for normal growth rate. Required for survival upon exposure to K1 killer toxin and hence plays a role in cell wall glucan synthesis. Required for dithiothreitol (DTT) resistance. Involved in cell cycle progression. The protein is Protein FYV5 (FYV5) of Saccharomyces cerevisiae (strain ATCC 204508 / S288c) (Baker's yeast).